The chain runs to 98 residues: Feather keratin 1 (98 aa).

The protein belongs to the avian keratin family. As to quaternary structure, the avian keratins (F-ker, S-ker, C-ker and B-ker) are a complex mixture of very similar polypeptides.

In Gallus gallus (Chicken), this protein is Feather keratin 1.